The primary structure comprises 516 residues: Cytochrome P450 1A2 (516 aa).

Serine 69 carries O-linked (GlcNAc) serine glycosylation. A substrate-binding site is contributed by phenylalanine 226. Cysteine 458 is a binding site for heme.

Belongs to the cytochrome P450 family. In terms of assembly, interacts with PGRMC1; the interaction requires PGRMC1 homodimerization. It depends on heme as a cofactor.

The protein resides in the endoplasmic reticulum membrane. Its subcellular location is the microsome membrane. The catalysed reaction is an organic molecule + reduced [NADPH--hemoprotein reductase] + O2 = an alcohol + oxidized [NADPH--hemoprotein reductase] + H2O + H(+). It catalyses the reaction 17beta-estradiol + reduced [NADPH--hemoprotein reductase] + O2 = 2-hydroxy-17beta-estradiol + oxidized [NADPH--hemoprotein reductase] + H2O + H(+). The enzyme catalyses 17beta-estradiol + reduced [NADPH--hemoprotein reductase] + O2 = 4-hydroxy-17beta-estradiol + oxidized [NADPH--hemoprotein reductase] + H2O + H(+). It carries out the reaction estrone + reduced [NADPH--hemoprotein reductase] + O2 = 2-hydroxyestrone + oxidized [NADPH--hemoprotein reductase] + H2O + H(+). The catalysed reaction is estrone + reduced [NADPH--hemoprotein reductase] + O2 = 4-hydroxyestrone + oxidized [NADPH--hemoprotein reductase] + H2O + H(+). It catalyses the reaction cholesterol + reduced [NADPH--hemoprotein reductase] + O2 = 25-hydroxycholesterol + oxidized [NADPH--hemoprotein reductase] + H2O + H(+). The enzyme catalyses all-trans-retinol + reduced [NADPH--hemoprotein reductase] + O2 = all-trans-retinal + oxidized [NADPH--hemoprotein reductase] + 2 H2O + H(+). It carries out the reaction all-trans-retinal + reduced [NADPH--hemoprotein reductase] + O2 = all-trans-retinoate + oxidized [NADPH--hemoprotein reductase] + H2O + 2 H(+). The catalysed reaction is (5Z,8Z,11Z,14Z)-eicosatetraenoate + reduced [NADPH--hemoprotein reductase] + O2 = (14R,15S)-epoxy-(5Z,8Z,11Z)-eicosatrienoate + oxidized [NADPH--hemoprotein reductase] + H2O + H(+). It catalyses the reaction (5Z,8Z,11Z,14Z)-eicosatetraenoate + reduced [NADPH--hemoprotein reductase] + O2 = (14S,15R)-epoxy-(5Z,8Z,11Z)-eicosatrienoate + oxidized [NADPH--hemoprotein reductase] + H2O + H(+). The enzyme catalyses (5Z,8Z,11Z,14Z,17Z)-eicosapentaenoate + reduced [NADPH--hemoprotein reductase] + O2 = (17R,18S)-epoxy-(5Z,8Z,11Z,14Z)-eicosatetraenoate + oxidized [NADPH--hemoprotein reductase] + H2O + H(+). It carries out the reaction (4Z,7Z,10Z,13Z,16Z,19Z)-docosahexaenoate + reduced [NADPH--hemoprotein reductase] + O2 = (19R,20S)-epoxy-(4Z,7Z,10Z,13Z,16Z)-docosapentaenoate + oxidized [NADPH--hemoprotein reductase] + H2O + H(+). The catalysed reaction is (5S)-hydroperoxy-(6E,8Z,11Z,14Z)-eicosatetraenoate = 5-oxo-(6E,8Z,11Z,14Z)-eicosatetraenoate + H2O. It catalyses the reaction (12S)-hydroperoxy-(5Z,8Z,10E,14Z)-eicosatetraenoate = 12-oxo-(5Z,8Z,10E,14Z)-eicosatetraenoate + H2O. The enzyme catalyses (15S)-hydroperoxy-(5Z,8Z,11Z,13E)-eicosatetraenoate = 15-oxo-(5Z,8Z,11Z,13E)-eicosatetraenoate + H2O. It carries out the reaction (13S)-hydroperoxy-(9Z,11E)-octadecadienoate = 13-oxo-(9Z,11E)-octadecadienoate + H2O. The catalysed reaction is (5Z,8Z,11Z,14Z)-eicosatetraenoate + reduced [NADPH--hemoprotein reductase] + O2 = 13-hydroxy-(5Z,8Z,11Z,14Z)-eicosatetraenoate + oxidized [NADPH--hemoprotein reductase] + H2O + H(+). It catalyses the reaction (5Z,8Z,11Z,14Z)-eicosatetraenoate + reduced [NADPH--hemoprotein reductase] + O2 = 19-hydroxy-(5Z,8Z,11Z,14Z)-eicosatetraenoate + oxidized [NADPH--hemoprotein reductase] + H2O + H(+). The enzyme catalyses (9Z,12Z)-octadecadienoate + reduced [NADPH--hemoprotein reductase] + O2 = 11-hydroxy-(9Z,12Z)-octadecadienoate + oxidized [NADPH--hemoprotein reductase] + H2O + H(+). Its pathway is cofactor metabolism; retinol metabolism. It participates in steroid metabolism; cholesterol metabolism. The protein operates within lipid metabolism; arachidonate metabolism. Functionally, a cytochrome P450 monooxygenase involved in the metabolism of various endogenous substrates, including fatty acids, steroid hormones and vitamins. Mechanistically, uses molecular oxygen inserting one oxygen atom into a substrate, and reducing the second into a water molecule, with two electrons provided by NADPH via cytochrome P450 reductase (NADPH--hemoprotein reductase). Catalyzes the hydroxylation of carbon-hydrogen bonds. Exhibits high catalytic activity for the formation of hydroxyestrogens from estrone (E1) and 17beta-estradiol (E2), namely 2-hydroxy E1 and E2. Metabolizes cholesterol toward 25-hydroxycholesterol, a physiological regulator of cellular cholesterol homeostasis. May act as a major enzyme for all-trans retinoic acid biosynthesis in the liver. Catalyzes two successive oxidative transformation of all-trans retinol to all-trans retinal and then to the active form all-trans retinoic acid. Primarily catalyzes stereoselective epoxidation of the last double bond of polyunsaturated fatty acids (PUFA), displaying a strong preference for the (R,S) stereoisomer. Catalyzes bisallylic hydroxylation and omega-1 hydroxylation of PUFA. May also participate in eicosanoids metabolism by converting hydroperoxide species into oxo metabolites (lipoxygenase-like reaction, NADPH-independent). Plays a role in the oxidative metabolism of xenobiotics. Catalyzes the N-hydroxylation of heterocyclic amines and the O-deethylation of phenacetin. Metabolizes caffeine via N3-demethylation. The sequence is that of Cytochrome P450 1A2 (CYP1A2) from Balaenoptera acutorostrata (Common minke whale).